We begin with the raw amino-acid sequence, 470 residues long: Mucin-like protein 3 (470 aa).

Residues 1–29 (MAQMTSGLYPMFGFFICLLFLPASWEAGA) form the signal peptide. The Extracellular portion of the chain corresponds to 30 to 401 (NTFQELQKTG…EGSNSFPAWA (372 aa)). 2 disordered regions span residues 57–234 (RALS…HTIP) and 248–318 (TKEA…KAPE). Over residues 75–87 (STATQKPKRQCNT) the composition is skewed to polar residues. Residue Asn-122 is glycosylated (N-linked (GlcNAc...) asparagine). The span at 132–152 (ARNERSADDHGSTNSEKRSDG) shows a compositional bias: basic and acidic residues. A compositionally biased stretch (polar residues) spans 169–193 (TRTSGTPVSSTETSTKLRTTSQKPE). Basic and acidic residues predominate over residues 194–203 (TSSHDSDLIR). The span at 204–222 (KSTSLPVKSTEVSRTSYRT) shows a compositional bias: polar residues. Residues 260–273 (KYERETRSASERIS) show a composition bias toward basic and acidic residues. A compositionally biased stretch (polar residues) spans 283–295 (HTPSAGETTTQVS). The N-linked (GlcNAc...) asparagine glycan is linked to Asn-325. A helical transmembrane segment spans residues 402 to 422 (IVVVILMAVIILLIFLGLIFL). At 423 to 470 (VSCASRARHQLTQNSEDAEPEDKGGRNSYPVYLMEQQNLNLNQISSPP) the chain is on the cytoplasmic side.

It is found in the cell membrane. The protein localises to the cytoplasm. Its function is as follows. May modulate NF-kappaB signaling and play a role in cell growth. The protein is Mucin-like protein 3 of Rattus norvegicus (Rat).